Consider the following 226-residue polypeptide: Cytidylate kinase (226 aa).

11–19 (GPASAGKST) contacts ATP.

The protein belongs to the cytidylate kinase family. Type 1 subfamily.

Its subcellular location is the cytoplasm. It catalyses the reaction CMP + ATP = CDP + ADP. The catalysed reaction is dCMP + ATP = dCDP + ADP. This chain is Cytidylate kinase, found in Limosilactobacillus fermentum (strain NBRC 3956 / LMG 18251) (Lactobacillus fermentum).